A 299-amino-acid polypeptide reads, in one-letter code: Delta-9 desaturase-like 3 protein (299 aa).

The next 2 membrane-spanning stretches (helical) occupy residues 38–57 and 58–76; these read AVGA…TWEA and FRFA…TFSY. The Histidine box-1 signature appears at 77–82; the sequence is HRNLTH. The short motif at 114 to 118 is the Histidine box-2 element; it reads HRFHH. 2 helical membrane-spanning segments follow: residues 174–194 and 198–218; these read IGLH…LPYL and VGVG…ACHI. Residues 246 to 250 carry the Histidine box-3 motif; it reads HNNHH. The helical transmembrane segment at 262–282 threads the bilayer; it reads WYQVDLTWYLIWFFQVLGLAT.

This sequence belongs to the fatty acid desaturase type 1 family. Fe cation serves as cofactor.

The protein resides in the endoplasmic reticulum membrane. It functions in the pathway lipid metabolism; polyunsaturated fatty acid biosynthesis. This is Delta-9 desaturase-like 3 protein from Arabidopsis thaliana (Mouse-ear cress).